The sequence spans 115 residues: Ribonuclease P protein component (115 aa).

This sequence belongs to the RnpA family. In terms of assembly, consists of a catalytic RNA component (M1 or rnpB) and a protein subunit.

It catalyses the reaction Endonucleolytic cleavage of RNA, removing 5'-extranucleotides from tRNA precursor.. RNaseP catalyzes the removal of the 5'-leader sequence from pre-tRNA to produce the mature 5'-terminus. It can also cleave other RNA substrates such as 4.5S RNA. The protein component plays an auxiliary but essential role in vivo by binding to the 5'-leader sequence and broadening the substrate specificity of the ribozyme. The sequence is that of Ribonuclease P protein component from Staphylococcus carnosus (strain TM300).